The chain runs to 407 residues: Argininosuccinate synthase (407 aa).

Residues 16–24 (AYSGGLDTS) and A44 contribute to the ATP site. L-citrulline contacts are provided by Y96 and S101. G126 contacts ATP. T128, N132, and D133 together coordinate L-aspartate. An L-citrulline-binding site is contributed by N132. Positions 136, 185, 194, 270, and 282 each coordinate L-citrulline.

Belongs to the argininosuccinate synthase family. Type 1 subfamily. In terms of assembly, homotetramer.

The protein resides in the cytoplasm. It carries out the reaction L-citrulline + L-aspartate + ATP = 2-(N(omega)-L-arginino)succinate + AMP + diphosphate + H(+). The protein operates within amino-acid biosynthesis; L-arginine biosynthesis; L-arginine from L-ornithine and carbamoyl phosphate: step 2/3. This chain is Argininosuccinate synthase, found in Shewanella putrefaciens (strain CN-32 / ATCC BAA-453).